A 541-amino-acid chain; its full sequence is Chaperonin GroEL (541 aa).

Residues Thr-29–Pro-32, Asp-86–Thr-90, Gly-413, and Asp-494 each bind ATP.

This sequence belongs to the chaperonin (HSP60) family. As to quaternary structure, forms a cylinder of 14 subunits composed of two heptameric rings stacked back-to-back. Interacts with the co-chaperonin GroES.

It localises to the cytoplasm. The enzyme catalyses ATP + H2O + a folded polypeptide = ADP + phosphate + an unfolded polypeptide.. In terms of biological role, together with its co-chaperonin GroES, plays an essential role in assisting protein folding. The GroEL-GroES system forms a nano-cage that allows encapsulation of the non-native substrate proteins and provides a physical environment optimized to promote and accelerate protein folding. In Acetivibrio thermocellus (strain ATCC 27405 / DSM 1237 / JCM 9322 / NBRC 103400 / NCIMB 10682 / NRRL B-4536 / VPI 7372) (Clostridium thermocellum), this protein is Chaperonin GroEL.